A 180-amino-acid polypeptide reads, in one-letter code: ATP-dependent protease subunit HslV (180 aa).

Thr5 is an active-site residue. The Na(+) site is built by Gly165, Cys168, and Thr171.

It belongs to the peptidase T1B family. HslV subfamily. As to quaternary structure, a double ring-shaped homohexamer of HslV is capped on each side by a ring-shaped HslU homohexamer. The assembly of the HslU/HslV complex is dependent on binding of ATP.

It is found in the cytoplasm. It carries out the reaction ATP-dependent cleavage of peptide bonds with broad specificity.. Allosterically activated by HslU binding. Its function is as follows. Protease subunit of a proteasome-like degradation complex believed to be a general protein degrading machinery. The chain is ATP-dependent protease subunit HslV from Helicobacter hepaticus (strain ATCC 51449 / 3B1).